A 195-amino-acid chain; its full sequence is ATP-dependent Clp protease proteolytic subunit 2 (195 aa).

Ser95 functions as the Nucleophile in the catalytic mechanism. The active site involves His120.

Belongs to the peptidase S14 family. In terms of assembly, fourteen ClpP subunits assemble into 2 heptameric rings which stack back to back to give a disk-like structure with a central cavity, resembling the structure of eukaryotic proteasomes.

It localises to the cytoplasm. The enzyme catalyses Hydrolysis of proteins to small peptides in the presence of ATP and magnesium. alpha-casein is the usual test substrate. In the absence of ATP, only oligopeptides shorter than five residues are hydrolyzed (such as succinyl-Leu-Tyr-|-NHMec, and Leu-Tyr-Leu-|-Tyr-Trp, in which cleavage of the -Tyr-|-Leu- and -Tyr-|-Trp bonds also occurs).. In terms of biological role, cleaves peptides in various proteins in a process that requires ATP hydrolysis. Has a chymotrypsin-like activity. Plays a major role in the degradation of misfolded proteins. The chain is ATP-dependent Clp protease proteolytic subunit 2 from Methylococcus capsulatus (strain ATCC 33009 / NCIMB 11132 / Bath).